The chain runs to 324 residues: Beta-ketoacyl-[acyl-carrier-protein] synthase III (324 aa).

Active-site residues include C112 and H251. Residues Q252–R256 are ACP-binding. N281 is an active-site residue.

Belongs to the thiolase-like superfamily. FabH family. As to quaternary structure, homodimer.

It is found in the cytoplasm. The catalysed reaction is malonyl-[ACP] + acetyl-CoA + H(+) = 3-oxobutanoyl-[ACP] + CO2 + CoA. Its pathway is lipid metabolism; fatty acid biosynthesis. Its function is as follows. Catalyzes the condensation reaction of fatty acid synthesis by the addition to an acyl acceptor of two carbons from malonyl-ACP. Catalyzes the first condensation reaction which initiates fatty acid synthesis and may therefore play a role in governing the total rate of fatty acid production. Possesses both acetoacetyl-ACP synthase and acetyl transacylase activities. Its substrate specificity determines the biosynthesis of branched-chain and/or straight-chain of fatty acids. The protein is Beta-ketoacyl-[acyl-carrier-protein] synthase III of Clostridium perfringens (strain SM101 / Type A).